We begin with the raw amino-acid sequence, 71 residues long: MNDLKLLRSKLSTDTIEELYKNLNLLKKELFNLRFQQALGELKNTSRFSLVKKSIARIKTELTKRSNSEEY.

This sequence belongs to the universal ribosomal protein uL29 family.

This Rickettsia akari (strain Hartford) protein is Large ribosomal subunit protein uL29.